Reading from the N-terminus, the 979-residue chain is MHC class II regulatory factor RFX1 (979 aa).

Disordered regions lie at residues 1 to 136 (MATQ…QVVQ), 181 to 227 (QSAA…PTGT), and 370 to 405 (TSTGAGASNSSGGGGSGGGGGGGGGGGGGGSGSTGG). Residues 12-44 (APPPSQPPQAPPQAQPQPPPPPPPAAPQPPQPP) show a composition bias toward pro residues. The span at 45-73 (TAAATPQPQYVTELQSPQPQAQPPGGQKQ) shows a compositional bias: low complexity. Ser-60 bears the Phosphoserine mark. The span at 81-96 (VPAPSQPTGAPTPSPA) shows a compositional bias: pro residues. Positions 114 to 126 (ETVSEASPGSTAS) are enriched in polar residues. The span at 127–136 (QTGVPTQVVQ) shows a compositional bias: low complexity. Composition is skewed to polar residues over residues 190 to 203 (GQVSLTVHGTQQVH) and 209 to 220 (SPVQANSSSSKT). The segment covering 370–379 (TSTGAGASNS) has biased composition (low complexity). Residues 380–405 (SGGGGSGGGGGGGGGGGGGGSGSTGG) show a composition bias toward gly residues. The RFX-type winged-helix DNA-binding region spans 438–513 (TVQWLLDNYE…YHYYGLRIKA (76 aa)). A necessary for dimerization region spans residues 744 to 979 (FAQTLRRYTS…GLFVQALPSS (236 aa)). The disordered stretch occupies residues 915–960 (SLNPLDPDKDEEEEEEEESEDELPQDISLAAGGESPALGPETLEPP). Over residues 922-938 (DKDEEEEEEEESEDELP) the composition is skewed to acidic residues. A phosphoserine mark is found at Ser-978 and Ser-979.

The protein belongs to the RFX family. As to quaternary structure, homodimer; binds DNA as a homodimer. Heterodimer; heterodimerizes with RFX2 and RFX3.

Its subcellular location is the nucleus. Regulatory factor essential for MHC class II genes expression. Binds to the X boxes of MHC class II genes. Also binds to an inverted repeat (ENH1) required for hepatitis B virus genes expression and to the most upstream element (alpha) of the RPL30 promoter. The polypeptide is MHC class II regulatory factor RFX1 (RFX1) (Homo sapiens (Human)).